Consider the following 125-residue polypeptide: Protein ApaG (125 aa).

The region spanning 1–125 (MINSPRVCIQ…FRLAVPTLIH (125 aa)) is the ApaG domain.

The protein is Protein ApaG of Salmonella arizonae (strain ATCC BAA-731 / CDC346-86 / RSK2980).